We begin with the raw amino-acid sequence, 326 residues long: Probable cell division protein WhiA (326 aa).

Positions 275 to 308 (SLDELGHHADPPMTKDAVAGRIRRLLAMADKKAV) form a DNA-binding region, H-T-H motif.

It belongs to the WhiA family.

Its function is as follows. Involved in cell division and chromosome segregation. The sequence is that of Probable cell division protein WhiA from Clavibacter sepedonicus (Clavibacter michiganensis subsp. sepedonicus).